Here is a 561-residue protein sequence, read N- to C-terminus: Tectonic-like complex member MKS1 (561 aa).

In terms of domain architecture, C2 B9-type spans 314–442 (LRLFVNGEVV…TASTWRPMEL (129 aa)).

As to quaternary structure, part of the tectonic-like complex (also named B9 complex). Interacts with TMEM107. Interacts with TCTN3, AHI1, TCTN1, TCTN2, CC2D2A. Interacts with FLNA. Interacts with TMEM67. Interacts with B9D1 and B9D2.

Its subcellular location is the cytoplasm. It localises to the cytoskeleton. The protein localises to the cilium basal body. It is found in the microtubule organizing center. The protein resides in the centrosome. In terms of biological role, component of the tectonic-like complex, a complex localized at the transition zone of primary cilia and acting as a barrier that prevents diffusion of transmembrane proteins between the cilia and plasma membranes. Involved in centrosome migration to the apical cell surface during early ciliogenesis. Required for ciliary structure and function, including a role in regulating length and appropriate number through modulating centrosome duplication. Required for cell branching morphology. The chain is Tectonic-like complex member MKS1 (Mks1) from Rattus norvegicus (Rat).